A 140-amino-acid polypeptide reads, in one-letter code: Fluoride-specific ion channel FluC 1 (140 aa).

3 helical membrane passes run 45 to 65 (IPSL…IGFL), 82 to 102 (FLGA…TQTI), and 106 to 126 (LFYG…GVFI). Na(+) is bound by residues Gly-89 and Thr-92.

It belongs to the fluoride channel Fluc/FEX (TC 1.A.43) family.

The protein localises to the cell membrane. The catalysed reaction is fluoride(in) = fluoride(out). Its activity is regulated as follows. Na(+) is not transported, but it plays an essential structural role and its presence is essential for fluoride channel function. Fluoride-specific ion channel. Important for reducing fluoride concentration in the cell, thus reducing its toxicity. This is Fluoride-specific ion channel FluC 1 from Methanospirillum hungatei JF-1 (strain ATCC 27890 / DSM 864 / NBRC 100397 / JF-1).